Reading from the N-terminus, the 1050-residue chain is Elongation factor 3 (1050 aa).

ADP contacts are provided by valine 43 and histidine 45. One copy of the HEAT 1 repeat lies at 46-83 (DVPVEFFEDLKKQIQSKDAKVSLAALDAYKHIASTNGL). Residue serine 86 coordinates ADP. HEAT repeat units lie at residues 89–126 (PYVV…AITP), 127–165 (TAVK…TAKA), 169–206 (LRMP…TIDN), 208–244 (DIEK…EVTM), 245–282 (ATLS…LVED), and 288–326 (PFMD…VGAV). Threonine 395, histidine 399, and glutamate 400 together coordinate ADP. ABC transporter domains lie at 429–646 (DEGE…YYEL) and 672–998 (VKVS…KKDD). ADP contacts are provided by asparagine 708, glutamate 927, asparagine 930, and histidine 956. Positions 980-1050 (GHNWVQGQGS…DAYVSSDEEF (71 aa)) are disordered. The span at 1013-1037 (AAKKKKKLSSAELRKKKKERMKKKK) shows a compositional bias: basic residues.

The protein belongs to the ABC transporter superfamily. ABCF family. EF3 subfamily. As to quaternary structure, monomer.

The protein localises to the cytoplasm. It catalyses the reaction ATP + H2O = ADP + phosphate + H(+). Its pathway is protein biosynthesis; polypeptide chain elongation. Functionally, ribosome-dependent ATPase that functions in cytoplasmic translation elongation. Required for the ATP-dependent release of deacylated tRNA from the ribosomal E-site during protein biosynthesis. Stimulates the eEF1A-dependent binding of aminoacyl-tRNA to the ribosomal A-site, which has reduced affinity for tRNA as long as the E-site is occupied. Assists translation termination by stimulating the release of nascent protein from the ribosome by release factors. This chain is Elongation factor 3 (CEF3), found in Candida albicans (strain SC5314 / ATCC MYA-2876) (Yeast).